A 441-amino-acid polypeptide reads, in one-letter code: Zinc finger protein ZIC 3 (441 aa).

The segment at 222–257 (LSCKWLEESPMNRPQKTCDRTFSSMHELVTHMTMEH) adopts a C2H2-type 1; atypical zinc-finger fold. The segment at 266–293 (HICYWEECPRGGKSFKAKYKLVNHIRVH) adopts a C2H2-type 2; atypical zinc-finger fold. 3 C2H2-type zinc fingers span residues 299–323 (FPCPFPGCGKIFARSENLKIHKRTH), 329–353 (FKCEFEGCDRRFANSSDRKKHMHVH), and 359–381 (YICKVCDKSYTHPSSLRKHMKVH). Residues 375–441 (RKHMKVHESQ…LPPNFNEWYV (67 aa)) are disordered. Over residues 383 to 399 (SQGSDSSPAASSGYESA) the composition is skewed to low complexity. Over residues 406-429 (SANSEEPSKNSSATHQTNNSSHNT) the composition is skewed to polar residues.

This sequence belongs to the GLI C2H2-type zinc-finger protein family.

Its subcellular location is the nucleus. The protein localises to the cytoplasm. Its function is as follows. Probably acts as a transcriptional activator. May bind to the minimal GLI-consensus sequence 5'-GGGTGGTC-3'. Can determine the ectodermal cell fate and promote the earliest step of neural and neural crest development. Involved in establishing left-right asymmetry in the embryo. In Xenopus tropicalis (Western clawed frog), this protein is Zinc finger protein ZIC 3 (zic3).